The chain runs to 239 residues: Probable inner membrane transporter protein TsaS (239 aa).

4 consecutive transmembrane segments (helical) span residues 65–85, 128–148, 160–180, and 186–206; these read AIGA…WLMG, GLVG…IALL, ATVP…LFGA, and AHTF…VVLG.

Belongs to the 4-toluene sulfonate uptake permease (TSUP) (TC 2.A.102) family. In terms of assembly, part of a two-component transport system composed of TsaT and TsaS.

It localises to the cell inner membrane. Involved in the uptake of p-toluenesulphonate (TSA). The sequence is that of Probable inner membrane transporter protein TsaS (tsaS) from Comamonas testosteroni (Pseudomonas testosteroni).